The primary structure comprises 342 residues: Galactose mutarotase (342 aa).

The residue at position 14 (Ser-14) is a Phosphoserine. Beta-D-galactose is bound by residues 81–82 and His-107; that span reads NR. The residue at position 124 (Ser-124) is a Phosphoserine. The active-site Proton donor is His-176. Beta-D-galactose-binding positions include 176 to 178, Asp-243, Gln-279, and Glu-307; that span reads HSY. Glu-307 functions as the Proton acceptor in the catalytic mechanism.

The protein belongs to the aldose epimerase family. In terms of assembly, monomer.

It localises to the cytoplasm. It catalyses the reaction alpha-D-galactose = beta-D-galactose. It carries out the reaction alpha-D-glucose = beta-D-glucose. Its pathway is carbohydrate metabolism; hexose metabolism. The protein operates within carbohydrate metabolism; galactose metabolism. Mutarotase that catalyzes the interconversion of beta-D-galactose and alpha-D-galactose during galactose metabolism. Beta-D-galactose is metabolized in the liver into glucose 1-phosphate, the primary metabolic fuel, by the action of four enzymes that constitute the Leloir pathway: GALM, GALK1 (galactokinase), GALT (galactose-1-phosphate uridylyltransferase) and GALE (UDP-galactose-4'-epimerase). Involved in the maintenance of the equilibrium between the beta- and alpha-anomers of galactose, therefore ensuring a sufficient supply of the alpha-anomer for GALK1. Also active on D-glucose although shows a preference for galactose over glucose. The protein is Galactose mutarotase (GALM) of Sus scrofa (Pig).